Reading from the N-terminus, the 351-residue chain is Histidinol-phosphate aminotransferase (351 aa).

The residue at position 213 (lysine 213) is an N6-(pyridoxal phosphate)lysine.

It belongs to the class-II pyridoxal-phosphate-dependent aminotransferase family. Histidinol-phosphate aminotransferase subfamily. In terms of assembly, homodimer. Pyridoxal 5'-phosphate is required as a cofactor.

It carries out the reaction L-histidinol phosphate + 2-oxoglutarate = 3-(imidazol-4-yl)-2-oxopropyl phosphate + L-glutamate. The protein operates within amino-acid biosynthesis; L-histidine biosynthesis; L-histidine from 5-phospho-alpha-D-ribose 1-diphosphate: step 7/9. This Thermoanaerobacter pseudethanolicus (strain ATCC 33223 / 39E) (Clostridium thermohydrosulfuricum) protein is Histidinol-phosphate aminotransferase.